The following is a 131-amino-acid chain: Profilin-4 (131 aa).

This sequence belongs to the profilin family. As to quaternary structure, occurs in many kinds of cells as a complex with monomeric actin in a 1:1 ratio.

The protein resides in the cytoplasm. Its subcellular location is the cytoskeleton. In terms of biological role, binds to actin and affects the structure of the cytoskeleton. At high concentrations, profilin prevents the polymerization of actin, whereas it enhances it at low concentrations. By binding to PIP2, it inhibits the formation of IP3 and DG. This Hevea brasiliensis (Para rubber tree) protein is Profilin-4.